We begin with the raw amino-acid sequence, 196 residues long: Large ribosomal subunit protein bL9 (196 aa).

Belongs to the bacterial ribosomal protein bL9 family.

Functionally, binds to the 23S rRNA. The protein is Large ribosomal subunit protein bL9 of Gluconobacter oxydans (strain 621H) (Gluconobacter suboxydans).